We begin with the raw amino-acid sequence, 146 residues long: BCL7-like protein (146 aa).

Positions 59–146 are disordered; the sequence is MAPPKIKEVK…RDAEMTSKQP (88 aa). Polar residues-rich tracts occupy residues 75 to 90 and 113 to 134; these read NQVP…TSVT and DSNQ…TDFS. Over residues 135-146 the composition is skewed to basic and acidic residues; sequence SMRDAEMTSKQP.

The protein belongs to the BCL7 family. In terms of tissue distribution, ubiquitous.

It is found in the nucleus. Functionally, required for the terminal differentiation of seam cells, and the differentiation of distal tip cells important for normal somatic gonad and germ cell development. Plays a role in the Wnt signaling pathway, regulating the expression of beta-catenin homologs wrm-1, bar-1 and sys-1, and the localization of wrm-1 and the wnt signaling pathway component pop-1 during asymmetric cell division of seam cells and the Z-cell lineage of the somatic gonad, respectively. May have a pro-apoptotic role, possibly linked to the negative regulation of expression of anti-apoptotic factor ced-9. The chain is BCL7-like protein from Caenorhabditis elegans.